The primary structure comprises 173 residues: Photosystem I assembly protein Ycf3 (173 aa).

TPR repeat units lie at residues 35 to 68, 72 to 105, and 120 to 153; these read AYIYYRDGLAAQNNGDYSEALDYYNESLLLEENK, GETLKNMAIIYMSNGEEDRSIETYQKALEENPKQ, and GRFAEQNGDLDQRDMWFDKAAQVWSKAVRLYPGG.

The protein belongs to the Ycf3 family.

The protein resides in the cellular thylakoid membrane. Essential for the assembly of the photosystem I (PSI) complex. May act as a chaperone-like factor to guide the assembly of the PSI subunits. This Prochlorococcus marinus subsp. pastoris (strain CCMP1986 / NIES-2087 / MED4) protein is Photosystem I assembly protein Ycf3.